Here is a 127-residue protein sequence, read N- to C-terminus: Large ribosomal subunit protein bL12 (127 aa).

2 positions are modified to N6-methyllysine: Lys-77 and Lys-88.

This sequence belongs to the bacterial ribosomal protein bL12 family. In terms of assembly, homodimer. Part of the ribosomal stalk of the 50S ribosomal subunit. Forms a multimeric L10(L12)X complex, where L10 forms an elongated spine to which 2 to 4 L12 dimers bind in a sequential fashion. Binds GTP-bound translation factors.

In terms of biological role, forms part of the ribosomal stalk which helps the ribosome interact with GTP-bound translation factors. Is thus essential for accurate translation. The chain is Large ribosomal subunit protein bL12 from Nitratidesulfovibrio vulgaris (strain DSM 19637 / Miyazaki F) (Desulfovibrio vulgaris).